The sequence spans 160 residues: Fimbrial protein (160 aa).

Positions 1-7 (MKSLQKG) are cleaved as a propeptide — leader sequence. Phenylalanine 8 is modified (N-methylphenylalanine). Residues 8 to 28 (FTLIELMIVVAIIGILAAFAI) form a helical membrane-spanning segment.

It belongs to the N-Me-Phe pilin family. In terms of assembly, the pili are polar flexible filaments of about 5.4 nanometers diameter and 2.5 micrometers average length; they consist of only a single polypeptide chain arranged in a helical configuration of five subunits per turn in the assembled pilus.

The protein localises to the fimbrium. Its subcellular location is the membrane. This is Fimbrial protein (fimA) from Dichelobacter nodosus (Bacteroides nodosus).